The following is a 405-amino-acid chain: Pre-mRNA-splicing factor cwc-24 (405 aa).

2 disordered regions span residues 1 to 114 and 162 to 184; these read MADT…NTIY and TKKK…DGTY. The segment covering 15 to 29 has biased composition (low complexity); that stretch reads EPTTATPTAPIAPVA. Residues 31–46 are compositionally biased toward basic residues; that stretch reads FKKRGAKGKANLRKRP. Over residues 56-70 the composition is skewed to acidic residues; that stretch reads SDDDSSDFESSEDEA. The span at 74–83 shows a compositional bias: basic residues; the sequence is RIKRRKKNHH. The C3H1-type zinc-finger motif lies at 221–249; sequence DMAPDVCKDYKQTGFCGFGDNCKFLHARE. The RING-type zinc finger occupies 310-349; sequence CIICRGPYSNSPVVTRCGHYFCEACALKRYRKDPSCAACG. The span at 370–386 shows a compositional bias: basic and acidic residues; it reads KARAERLRREARERGEE. The segment at 370–405 is disordered; that stretch reads KARAERLRREARERGEEVSEEEDEGEDEGEGAEGSD. Positions 387–405 are enriched in acidic residues; that stretch reads VSEEEDEGEDEGEGAEGSD.

The protein belongs to the CWC24 family. In terms of assembly, associated with the spliceosome.

It localises to the nucleus. Its function is as follows. Involved in pre-mRNA splicing. The chain is Pre-mRNA-splicing factor cwc-24 (cwc-24) from Neurospora crassa (strain ATCC 24698 / 74-OR23-1A / CBS 708.71 / DSM 1257 / FGSC 987).